An 821-amino-acid chain; its full sequence is V-type proton ATPase subunit a3 (821 aa).

Residue Ala-2 is modified to N-acetylalanine. At 2-421 the chain is on the cytoplasmic side; it reads AESGGGGGCC…ANPGVFTIVT (420 aa). Residues 97–144 are a coiled coil; sequence KENDIDLDDVEVKLGELEAELVEINANNDKLQRSYNELMEYKLVLQKA. Phosphoserine is present on Ser-174. Residues 422 to 442 form a helical membrane-spanning segment; sequence FPFLFAVMFGDWGHGICILLA. Residues 443–469 are Vacuolar-facing; it reads TMYLILKEKKLASQKLGDIMEMAFGGR. The chain crosses the membrane as a helical span at residues 470 to 490; sequence YVILMMSLFSIYTGLIYNEFF. Residues 491 to 548 are Cytoplasmic-facing; the sequence is SIPFPLFAPSAYDCRDVSCSEATTIGLIKVRDTYPFGLDPVWHGSRSELPFLNSLKMK. The chain crosses the membrane as a helical span at residues 549–569; the sequence is MSILLGVSQMNLGIIMSYFNA. Residues 570 to 581 lie on the Vacuolar side of the membrane; the sequence is RFFKSSVNIWFQ. Residues 582 to 602 form a helical membrane-spanning segment; it reads FIPQMIFLNSLFGYLSVLIII. Residues 603-640 lie on the Cytoplasmic side of the membrane; it reads KWCTGSQADLYHVMIYMFLSPMDELGENQLFPHQKTLQ. A helical transmembrane segment spans residues 641–661; the sequence is LVLLFLALVSVPCMLLPKPFI. Residues 662 to 758 lie on the Vacuolar side of the membrane; it reads LKKQHEARHQ…LLLAWGYNNP (97 aa). Residues 759-779 traverse the membrane as a helical segment; it reads LILIVGVLVFIFATVGVLLVM. Over 780–821 the chain is Cytoplasmic; sequence ETLSAFLHALRLHWVEFQNKFYEGDGYKFAPFTFIFTANEDE.

This sequence belongs to the V-ATPase 116 kDa subunit family. V-ATPase is a heteromultimeric enzyme composed of a peripheral catalytic V1 complex (components A to H) attached to an integral membrane V0 proton pore complex (components: a, c, c'', d and e). In terms of tissue distribution, expressed in etiolated seedlings hypocotyls.

It is found in the vacuole membrane. Essential component of the vacuolar proton pump (V-ATPase), a multimeric enzyme that catalyzes the translocation of protons across the membranes. Required for assembly and activity of the V-ATPase. Involved in vacuolar nutrient storage (e.g. accumulation and storage of nitrate) and in tolerance to some toxic ions (e.g. zinc ions sequestration in vacuoles). The sequence is that of V-type proton ATPase subunit a3 (VHA-a3) from Arabidopsis thaliana (Mouse-ear cress).